The sequence spans 792 residues: Endonuclease MutS2 (792 aa).

334–341 (GPNTGGKT) contacts ATP. In terms of domain architecture, Smr spans 717-792 (IDLRGMMLSE…ENGVTVVELK (76 aa)).

It belongs to the DNA mismatch repair MutS family. MutS2 subfamily. Homodimer. Binds to stalled ribosomes, contacting rRNA.

In terms of biological role, endonuclease that is involved in the suppression of homologous recombination and thus may have a key role in the control of bacterial genetic diversity. Its function is as follows. Acts as a ribosome collision sensor, splitting the ribosome into its 2 subunits. Detects stalled/collided 70S ribosomes which it binds and splits by an ATP-hydrolysis driven conformational change. Acts upstream of the ribosome quality control system (RQC), a ribosome-associated complex that mediates the extraction of incompletely synthesized nascent chains from stalled ribosomes and their subsequent degradation. Probably generates substrates for RQC. The sequence is that of Endonuclease MutS2 from Ruminiclostridium cellulolyticum (strain ATCC 35319 / DSM 5812 / JCM 6584 / H10) (Clostridium cellulolyticum).